The primary structure comprises 45 residues: Mu-conotoxin-like Cal 12.1.2d (45 aa).

4 cysteine pairs are disulfide-bonded: Cys-3/Cys-16, Cys-11/Cys-28, Cys-18/Cys-33, and Cys-27/Cys-39. 6'-bromotryptophan is present on Trp-17. Residue Pro-23 is modified to 4-hydroxyproline. Trp-37 and Trp-38 each carry 6'-bromotryptophan. A 4-hydroxyproline modification is found at Pro-40.

In terms of tissue distribution, expressed by the venom duct.

It localises to the secreted. Its function is as follows. Mu-conotoxins block voltage-gated sodium channels. This toxin reversibly blocks voltage-gated sodium channel in cephalopods, with no alteration in the voltage dependence of sodium conductance or on the kinetics of inactivation. The chain is Mu-conotoxin-like Cal 12.1.2d from Californiconus californicus (California cone).